The chain runs to 681 residues: Phenylalanine--tRNA ligase beta subunit (681 aa).

The region spanning Pro-288–Glu-363 is the B5 domain. Residues Asp-341, Asp-347, Glu-350, and Glu-351 each contribute to the Mg(2+) site. The FDX-ACB domain maps to Ser-586–Arg-681.

The protein belongs to the phenylalanyl-tRNA synthetase beta subunit family. Type 1 subfamily. As to quaternary structure, tetramer of two alpha and two beta subunits. Mg(2+) serves as cofactor.

It localises to the cytoplasm. It carries out the reaction tRNA(Phe) + L-phenylalanine + ATP = L-phenylalanyl-tRNA(Phe) + AMP + diphosphate + H(+). This Rhodopirellula baltica (strain DSM 10527 / NCIMB 13988 / SH1) protein is Phenylalanine--tRNA ligase beta subunit.